Here is a 434-residue protein sequence, read N- to C-terminus: 3-phosphoshikimate 1-carboxyvinyltransferase (434 aa).

3-phosphoshikimate is bound by residues Lys15, Ser16, and Arg20. Phosphoenolpyruvate is bound at residue Lys15. Residues Gly96 and Arg124 each coordinate phosphoenolpyruvate. 3-phosphoshikimate contacts are provided by Ser169, Gln171, Ser195, Asp319, and Lys346. Gln171 contributes to the phosphoenolpyruvate binding site. The active-site Proton acceptor is Asp319. 2 residues coordinate phosphoenolpyruvate: Arg350 and Arg394.

Belongs to the EPSP synthase family. In terms of assembly, monomer.

The protein resides in the cytoplasm. It carries out the reaction 3-phosphoshikimate + phosphoenolpyruvate = 5-O-(1-carboxyvinyl)-3-phosphoshikimate + phosphate. Its pathway is metabolic intermediate biosynthesis; chorismate biosynthesis; chorismate from D-erythrose 4-phosphate and phosphoenolpyruvate: step 6/7. Its function is as follows. Catalyzes the transfer of the enolpyruvyl moiety of phosphoenolpyruvate (PEP) to the 5-hydroxyl of shikimate-3-phosphate (S3P) to produce enolpyruvyl shikimate-3-phosphate and inorganic phosphate. In Chlorobium phaeobacteroides (strain DSM 266 / SMG 266 / 2430), this protein is 3-phosphoshikimate 1-carboxyvinyltransferase.